Reading from the N-terminus, the 160-residue chain is SKP1-like protein 1A (160 aa).

The segment at Ile-102 to Glu-160 is interaction with the F-box domain of F-box proteins.

It belongs to the SKP1 family. Part of a SCF E3 ubiquitin ligase complex composed of SKP1, CUL1, RBX1 (RBX1A or RBX1B) and F-box proteins. Interacts with SKIP1, SKIP2, SKIP3, SKIP4, SKIP6, FIB1/SKIP7, SKIP8, PP2A11/SKIP10, SKIP11, PP2B11/SKIP12, PP2A14/SKIP13, SKIP14, SKIP15, SKIP16, SKIP19/FBL20, SKIP20, PP2B1/SKIP21, SKIP22, SKIP23, SKIP24, SKIP25, TULP10/SKIP26, SKIP27, SKIP28/MEE11, AFR/SKIP29, SKIP30, SKIP31, SKIP32/FBP7, SKIP33, SKIP35, ADO1/ZTL, ADO2/LKP2, ADO3/FKF1, AFR, COI1, DOR, EBF1, EBF2, EID1, ORE9, PP2A13/SKIP9, TIR1, UFO, SKP2A, CPR1/CPR30, FBL17, NUP58, At1g55000, At1g67340, At1g78100, At3g04660, At3g61590, At4g38940 and At5g49610. The SKP1A subunit of the SCF E3 ubiquitin ligase complex can interact directly with KIN10, KIN11 and the proteasome subunit PAD1. This interaction can be disrupted by PRL1. In case of polerovirus infection, part of a SCF P0 complex composed of the viral silencing suppressor P0, SKP1 and CUL1. Interacts with turnip yellows virus P0. Interacts with VBF and Agrobacterium virF. Binds to KIB1. As to expression, accumulates only in meristematic cells. Expressed in inflorescence, shoot and root apical meristems, as well as in developing organs such as gametocytes and seeds. Also detected in cortical layer and epidermis of roots, leaves, pith and vascular bundle of young stem, young floral buds and organ primordia, pollen and through the valve of siliques. Not detectable in mature root tissues.

It is found in the nucleus. The protein localises to the cytoplasm. It localises to the cytoskeleton. The protein resides in the spindle. Its subcellular location is the phragmoplast. The protein operates within protein modification; protein ubiquitination. Functionally, involved in ubiquitination and subsequent proteasomal degradation of target proteins. Together with CUL1, RBX1 and a F-box protein, it forms a SCF E3 ubiquitin ligase complex. The functional specificity of this complex depends on the type of F-box protein. In the SCF complex, it serves as an adapter that links the F-box protein to CUL1. SCF(UFO) is required for vegetative and floral organ development as well as for male gametogenesis. SCF(TIR1) is involved in auxin signaling pathway. SCF(COI1) regulates responses to jasmonates. SCF(EID1) and SCF(AFR) are implicated in phytochrome A light signaling. SCF(ADO1), SCF(ADO2), SCF(ADO3) are related to the circadian clock. SCF(ORE9) seems to be involved in senescence. SCF(EBF1/EBF2) may regulate ethylene signaling. Plays a role during embryogenesis and early postembryonic development, especially during cell elongation and division. Contributes to the correct chromosome segregation during tetrad formation. This is SKP1-like protein 1A from Arabidopsis thaliana (Mouse-ear cress).